Consider the following 197-residue polypeptide: Probable 26S proteasome non-ATPase regulatory subunit 9 (197 aa).

Residues 75 to 166 (KIVVEMENEN…KIIRVTVIRE (92 aa)) form the PDZ domain.

The protein belongs to the proteasome subunit p27 family.

Acts as a chaperone during the assembly of the 26S proteasome, specifically of the base subcomplex of the 19S regulatory complex (RC). The protein is Probable 26S proteasome non-ATPase regulatory subunit 9 (psmd-9) of Caenorhabditis elegans.